The primary structure comprises 498 residues: MTAPAAANAALDQTVVSLPVQETARVVRDTRPLRLITCGSVDDGKSTLIGRLLWDTKAVKEDQAASLQRDSSGKQNDLGLPDFALLLDGLQAEREQGITIDVAYRYFATDKRSFIVADTPGHEQYTRNMATGASTADLAVLLVDARVGLLEQTRRHATIATLMGIRQFVLAVNKIDLTNYDRARFDQISHEFRELALSLGVRQVTAIPVSALKGENVVYDGRASMPWYDGPTLIEILELATTRSAQTVGFRLPVQRVSRPGESFRGYQGTVAGGSVKPGDSVVILPSGMVANVSKIVTFDLVRNAAVAGDAITLVLDRQVDVSRGDVIASIDSQPTTGLAFDAQLVALQPEGIQPGKRYWLKSGSRRQRVQVQPVSQLELKSGKWNHADELPMNAIGKVHLAFDEQAIFDTYEQNRTTGAFILIDPDTNNTVAGGMITAKRAALGGIHAEESRVILSLPADLADQLMATELFASRREDVEVRRVTAGKAVNIIDAIDG.

In terms of domain architecture, tr-type G spans 30–246 (TRPLRLITCG…LELATTRSAQ (217 aa)). The segment at 39–46 (GSVDDGKS) is G1. 39-46 (GSVDDGKS) is a GTP binding site. Positions 97 to 101 (GITID) are G2. Residues 118 to 121 (DTPG) are G3. GTP contacts are provided by residues 118–122 (DTPGH) and 173–176 (NKID). Residues 173-176 (NKID) form a G4 region. A G5 region spans residues 210 to 212 (SAL).

The protein belongs to the TRAFAC class translation factor GTPase superfamily. Classic translation factor GTPase family. CysN/NodQ subfamily. In terms of assembly, heterodimer composed of CysD, the smaller subunit, and CysN.

The catalysed reaction is sulfate + ATP + H(+) = adenosine 5'-phosphosulfate + diphosphate. It participates in sulfur metabolism; hydrogen sulfide biosynthesis; sulfite from sulfate: step 1/3. Functionally, with CysD forms the ATP sulfurylase (ATPS) that catalyzes the adenylation of sulfate producing adenosine 5'-phosphosulfate (APS) and diphosphate, the first enzymatic step in sulfur assimilation pathway. APS synthesis involves the formation of a high-energy phosphoric-sulfuric acid anhydride bond driven by GTP hydrolysis by CysN coupled to ATP hydrolysis by CysD. This is Sulfate adenylyltransferase subunit 1 from Rhizobium meliloti (strain 1021) (Ensifer meliloti).